We begin with the raw amino-acid sequence, 284 residues long: Formamidopyrimidine-DNA glycosylase (284 aa).

The active-site Schiff-base intermediate with DNA is the Pro2. Glu3 acts as the Proton donor in catalysis. The active-site Proton donor; for beta-elimination activity is the Lys58. Positions 101, 120, and 163 each coordinate DNA. The FPG-type zinc finger occupies 248–284; the sequence is RVYDRENAPCVTAGCPDVVRRVVQSGRSSFYCPSCQR. The active-site Proton donor; for delta-elimination activity is Arg274.

Belongs to the FPG family. As to quaternary structure, monomer. Requires Zn(2+) as cofactor.

The enzyme catalyses Hydrolysis of DNA containing ring-opened 7-methylguanine residues, releasing 2,6-diamino-4-hydroxy-5-(N-methyl)formamidopyrimidine.. The catalysed reaction is 2'-deoxyribonucleotide-(2'-deoxyribose 5'-phosphate)-2'-deoxyribonucleotide-DNA = a 3'-end 2'-deoxyribonucleotide-(2,3-dehydro-2,3-deoxyribose 5'-phosphate)-DNA + a 5'-end 5'-phospho-2'-deoxyribonucleoside-DNA + H(+). Functionally, involved in base excision repair of DNA damaged by oxidation or by mutagenic agents. Acts as a DNA glycosylase that recognizes and removes damaged bases. Has a preference for oxidized purines, such as 7,8-dihydro-8-oxoguanine (8-oxoG). Has AP (apurinic/apyrimidinic) lyase activity and introduces nicks in the DNA strand. Cleaves the DNA backbone by beta-delta elimination to generate a single-strand break at the site of the removed base with both 3'- and 5'-phosphates. This is Formamidopyrimidine-DNA glycosylase from Dinoroseobacter shibae (strain DSM 16493 / NCIMB 14021 / DFL 12).